The sequence spans 479 residues: UDP-N-acetylmuramate--L-alanine ligase (479 aa).

An ATP-binding site is contributed by 124 to 130 (GSHGKTT).

This sequence belongs to the MurCDEF family.

The protein resides in the cytoplasm. It catalyses the reaction UDP-N-acetyl-alpha-D-muramate + L-alanine + ATP = UDP-N-acetyl-alpha-D-muramoyl-L-alanine + ADP + phosphate + H(+). The protein operates within cell wall biogenesis; peptidoglycan biosynthesis. Its function is as follows. Cell wall formation. The protein is UDP-N-acetylmuramate--L-alanine ligase of Synechococcus sp. (strain RCC307).